A 285-amino-acid chain; its full sequence is 2,3,4,5-tetrahydropyridine-2,6-dicarboxylate N-succinyltransferase (285 aa).

Residues arginine 111 and aspartate 148 each coordinate substrate.

It belongs to the transferase hexapeptide repeat family. As to quaternary structure, homotrimer.

It localises to the cytoplasm. The enzyme catalyses (S)-2,3,4,5-tetrahydrodipicolinate + succinyl-CoA + H2O = (S)-2-succinylamino-6-oxoheptanedioate + CoA. It functions in the pathway amino-acid biosynthesis; L-lysine biosynthesis via DAP pathway; LL-2,6-diaminopimelate from (S)-tetrahydrodipicolinate (succinylase route): step 1/3. The chain is 2,3,4,5-tetrahydropyridine-2,6-dicarboxylate N-succinyltransferase from Sinorhizobium medicae (strain WSM419) (Ensifer medicae).